Here is a 588-residue protein sequence, read N- to C-terminus: Schlafen family member 12-like (588 aa).

A helical transmembrane segment spans residues isoleucine 566 to phenylalanine 586.

The protein belongs to the Schlafen family.

The protein resides in the membrane. In Homo sapiens (Human), this protein is Schlafen family member 12-like (SLFN12L).